The following is an 82-amino-acid chain: Exodeoxyribonuclease 7 small subunit (82 aa).

Belongs to the XseB family. As to quaternary structure, heterooligomer composed of large and small subunits.

It localises to the cytoplasm. The catalysed reaction is Exonucleolytic cleavage in either 5'- to 3'- or 3'- to 5'-direction to yield nucleoside 5'-phosphates.. Bidirectionally degrades single-stranded DNA into large acid-insoluble oligonucleotides, which are then degraded further into small acid-soluble oligonucleotides. This chain is Exodeoxyribonuclease 7 small subunit, found in Mannheimia succiniciproducens (strain KCTC 0769BP / MBEL55E).